A 721-amino-acid chain; its full sequence is Glucans biosynthesis glucosyltransferase H (721 aa).

Helical transmembrane passes span 52–72 (CSWR…FAIF), 97–117 (NFCW…VLAS), 412–432 (SPFW…AHFI), 459–479 (FYIT…LLMF), 505–525 (ALVA…ILFG), and 570–590 (LLAW…LSGI).

It belongs to the glycosyltransferase 2 family. OpgH subfamily.

It is found in the cell inner membrane. It functions in the pathway glycan metabolism; osmoregulated periplasmic glucan (OPG) biosynthesis. In terms of biological role, involved in the biosynthesis of osmoregulated periplasmic glucans (OPGs). In Vibrio cholerae serotype O1 (strain ATCC 39541 / Classical Ogawa 395 / O395), this protein is Glucans biosynthesis glucosyltransferase H.